A 168-amino-acid polypeptide reads, in one-letter code: MPRSRINENFIDKTFSIVANILLRIIPTTSGEKRAFTYYRDGMSAQSEGNYAEALQNYYEAMRLEIDPYDRSYILYNIGLIHTSNGEHTKALEYYFRALERNPFLPQAFNNMAVICHYRGEQAIRQGDSEVAESWFNQAAEYWKQAIALTPGNYIAAQNWLKITGRFE.

TPR repeat units lie at residues 35 to 68 (AFTY…EIDP), 72 to 105 (SYIL…NPFL), and 120 to 153 (GEQA…TPGN).

Belongs to the Ycf3 family.

It is found in the plastid. The protein localises to the chloroplast thylakoid membrane. Its function is as follows. Essential for the assembly of the photosystem I (PSI) complex. May act as a chaperone-like factor to guide the assembly of the PSI subunits. The polypeptide is Photosystem I assembly protein Ycf3 (Phaseolus vulgaris (Kidney bean)).